We begin with the raw amino-acid sequence, 551 residues long: Putative transport protein HI_0035 (551 aa).

Transmembrane regions (helical) follow at residues 4–24, 28–48, 65–85, 95–115, and 157–177; these read IAITISLLALVAVIGLWIGHW, GVGLGIGGVLFGGIIVAHFTN, FGLILFVYTIGIQVGPGFFSS, AFAILIILLGSIAVVLVHKIA, and VSYAMAYPFGICGILLAMWLI. 2 consecutive RCK C-terminal domains span residues 191-275 and 277-360; these read RFNA…IIGH and VDAP…VIGN. 6 helical membrane-spanning segments follow: residues 370–390, 402–424, 438–458, 463–483, 492–512, and 529–549; these read MLPVFIGIGLGVLVGSIPFYI, AGGPLVVALILARIGTIGKLYWF, IVLFLAVVGLKSGGSFFDTLV, LEWMGYGIFITFVPLIIVGTI, YLTICGLLAGSMTDPPALAFA, and VYPLVMFLRIMSPQLLAVLLW.

It belongs to the AAE transporter (TC 2.A.81) family. YidE subfamily.

It localises to the cell membrane. The chain is Putative transport protein HI_0035 from Haemophilus influenzae (strain ATCC 51907 / DSM 11121 / KW20 / Rd).